We begin with the raw amino-acid sequence, 177 residues long: ATP synthase subunit delta (177 aa).

Belongs to the ATPase delta chain family. In terms of assembly, F-type ATPases have 2 components, F(1) - the catalytic core - and F(0) - the membrane proton channel. F(1) has five subunits: alpha(3), beta(3), gamma(1), delta(1), epsilon(1). F(0) has three main subunits: a(1), b(2) and c(10-14). The alpha and beta chains form an alternating ring which encloses part of the gamma chain. F(1) is attached to F(0) by a central stalk formed by the gamma and epsilon chains, while a peripheral stalk is formed by the delta and b chains.

It is found in the cell inner membrane. In terms of biological role, f(1)F(0) ATP synthase produces ATP from ADP in the presence of a proton or sodium gradient. F-type ATPases consist of two structural domains, F(1) containing the extramembraneous catalytic core and F(0) containing the membrane proton channel, linked together by a central stalk and a peripheral stalk. During catalysis, ATP synthesis in the catalytic domain of F(1) is coupled via a rotary mechanism of the central stalk subunits to proton translocation. This protein is part of the stalk that links CF(0) to CF(1). It either transmits conformational changes from CF(0) to CF(1) or is implicated in proton conduction. The sequence is that of ATP synthase subunit delta from Leptothrix cholodnii (strain ATCC 51168 / LMG 8142 / SP-6) (Leptothrix discophora (strain SP-6)).